The chain runs to 148 residues: Small ribosomal subunit protein eS6 (148 aa).

This sequence belongs to the eukaryotic ribosomal protein eS6 family.

The sequence is that of Small ribosomal subunit protein eS6 from Pyrobaculum aerophilum (strain ATCC 51768 / DSM 7523 / JCM 9630 / CIP 104966 / NBRC 100827 / IM2).